The sequence spans 172 residues: Calcium channel flower homolog (172 aa).

The Cytoplasmic portion of the chain corresponds to 1 to 32 (MSSSGGAPGASASSAPPAQEEGMTWWYRWLCR). The chain crosses the membrane as a helical span at residues 33-53 (LSGVLGAVSCAISGLFNCITI). The Extracellular segment spans residues 54–57 (HPLN). The helical transmembrane segment at 58 to 78 (IAAGVWMIMNAFILLLCEAPF) threads the bilayer. Topologically, residues 79 to 102 (CCQFIEFANTVAEKVDRLRSWQKA) are cytoplasmic. The helical transmembrane segment at 103-123 (VFYCGMAVVPIVISLTLTTLL) threads the bilayer. Residues 124–125 (GN) lie on the Extracellular side of the membrane. The chain crosses the membrane as a helical span at residues 126-142 (AIAFATGVLYGLSALGK). Residues 143–172 (KGDAISYARIQQQRQQADEEKLAETLEGEL) lie on the Cytoplasmic side of the membrane.

It belongs to the calcium channel flower family. Interacts with adaptor protein complex 2 (AP-2). As to expression, detected in skin cells at low levels of expression (at protein level).

The protein resides in the cell membrane. It is found in the cytoplasmic vesicle. The protein localises to the secretory vesicle. It localises to the synaptic vesicle. Its subcellular location is the golgi apparatus. The protein resides in the vesicle. It is found in the early endosome. The protein localises to the recycling endosome. It localises to the endoplasmic reticulum membrane. Its function is as follows. Transmembrane protein which mediates synaptic endocytosis and fitness-based cell culling. In response to different stimulus strengths, controls two major modes of synaptic vesicle (SV) retrieval in hippocampal neurons; Clathrin-mediated endocytosis (CME) in response to mild stimulation and activity-dependent bulk endocytosis (ADBE) in response to strong stimulation. In cytotoxic T-lymphoocytes (CTLs) facilitates calcium-dependent endocytosis of cytotoxic granules at the immuno synapse. Different isoforms work as fitness fingerprints in 'loser' and 'winner' cells and thereby mediate win/lose decisions as part of the cell competition process. In terms of biological role, functions with the other flower isoforms to produce tissue-specific fitness fingerprints that identify unfit or fit cells during cell selection processes in order to maintain tissue health. During cell competition, if levels of this isoform in cells is higher than in the surrounding neighboring cells, the cells are recognized as 'winner' cells, and do not undergo elimination via apoptosis. Functions with the other flower isoforms to produce tissue-specific fitness fingerprints that identify unfit or fit cells during cell selection processes in order to maintain tissue health. During cell competition, if levels of this isoform in unfit cells is higher than in the surrounding neighboring cells, the cells are recognized as 'loser' cells, and undergo elimination via apoptosis to be replaced by the surrounding healthy 'winner' cell population. The chain is Calcium channel flower homolog (CACFD1) from Homo sapiens (Human).